The following is a 976-amino-acid chain: Terminal uridylyltransferase 1 (976 aa).

Disordered stretches follow at residues 1–47 (MVSK…DADF) and 129–185 (TGRS…TTEG). The tract at residues 1–188 (MVSKYHRLLQ…EDDTTEGPRG (188 aa)) is required for oligomerization and may contribute to the incorporation into the MPsome complex. Residues 147 to 183 (ADDESDGNLDTDGSDASEGDEVESTTDADVYGEDDTT) are compositionally biased toward acidic residues. Residues 190 to 221 (VRLYSCDACPHAVFTTHAALLAHAEEHHADLL) form a C2H2-type; atypical zinc finger. Zn(2+) contacts are provided by Cys-195, Cys-198, His-212, and His-217. Residues Ser-298 and 309 to 312 (ADID) contribute to the UTP site. Positions 310 and 312 each coordinate Mg(2+). Arg-358 lines the RNA pocket. Residues 366 to 425 (ASSPILTVARRDAEDVVARSIRFILNGPATREDRLLLEGSVRDAVGPTGVQQVWWNRTSD) enclose the PAP-associated domain. UTP contacts are provided by residues 480–484 (GIRNS), Lys-505, Lys-509, and 523–524 (SY). The Nucleotide recognition motif (NRM) motif lies at 652–661 (IEDPYEENLN). The tract at residues 700 to 976 (DSSGTPAAGG…SKVTPFKSPR (277 aa)) is important for catalytic activity and RNA binding. Residues 732–755 (SESRRLPQSNSDNSGRIANGDNES) form a disordered region.

This sequence belongs to the DNA polymerase type-B-like family. Oligomer. Component of the mitochondrial 3' processome (MPsome) complex composed at least of terminal uridylyltransferase KRET1/TUT1, 3'-5' exonuclease DSS1, MPSS1, MPSS2 and MPSS3. Within the complex, interacts with DSS1, MPSS1 and MPSS3. Requires Mg(2+) as cofactor. Mn(2+) is required as a cofactor.

Its subcellular location is the mitochondrion. The catalysed reaction is RNA(n) + UTP = RNA(n)-3'-uridine ribonucleotide + diphosphate. Functionally, terminal uridylyltransferase which is involved in the post-transcriptional editing of mitochondrial RNA, a process involving the addition and deletion of uridine (U) nucleotides in the pre-RNA. Specifically, catalyzes the addition of Us to the 3'-hydroxyl group of guided RNA (gRNA), ribosomal RNA (rRNA) and some mRNAs. As part of the mitochondrial 3' processome (MPsome), catalyzes the primary 3' uridylation of gRNA precursors to facilitate their recognition and to induce their processive 3'-5' degradation by DSS1, and the secondary 3' uridylation of mature gRNAs. Involved in the 3' uridylylation of the long A/U tail of some edited and never-edited mRNAs. Promotes 3' uridylylation-mediated decay of some never-edited mRNAs. Does not mediate RNA-independent UTP polymerization. In Trypanosoma brucei brucei, this protein is Terminal uridylyltransferase 1.